Reading from the N-terminus, the 1003-residue chain is cGMP-dependent protein kinase (1003 aa).

Residues 1 to 141 (MGACSSKAQH…KAIKQQEDTQ (141 aa)) form a disordered region. A lipid anchor (N-myristoyl glycine) is attached at Gly-2. Cys-4 is lipidated: S-palmitoyl cysteine. A compositionally biased stretch (low complexity) spans 69–85 (EQQQQQQQQQQQQQEQQ). Basic and acidic residues-rich tracts occupy residues 86–109 (QHPE…ERKP) and 127–141 (ERKV…EDTQ). CNMP-binding domain regions lie at residues 173–289 (VCSS…FLAS), 292–391 (FFEM…RVLG), 411–548 (VFAS…ATLG), and 570–669 (IFRY…LQIV). 3',5'-cyclic GMP-binding residues include Gly-237, Glu-238, Arg-247, and Thr-248. The 3',5'-cyclic GMP site is built by Arg-625, Gly-634, Glu-635, Ala-637, Arg-644, and Ser-645. One can recognise a Protein kinase domain in the interval 693 to 950 (LNVVRVVGRG…YKDIKEHAFF (258 aa)). Residues 699–707 (VGRGTFGTV) and Lys-722 each bind ATP. Asp-816 functions as the Proton acceptor in the catalytic mechanism. Residues 951 to 1003 (SDFDWDRLAGRDLSPPLLPKGEIYAEDAEEGGLDIEEDEGIELEDEYEWDKDF) form the AGC-kinase C-terminal domain.

Belongs to the protein kinase superfamily. AGC Ser/Thr protein kinase family. cGMP subfamily. In terms of assembly, monomer. Mg(2+) is required as a cofactor.

It localises to the cell membrane. It is found in the cytoplasm. It catalyses the reaction L-seryl-[protein] + ATP = O-phospho-L-seryl-[protein] + ADP + H(+). The catalysed reaction is L-threonyl-[protein] + ATP = O-phospho-L-threonyl-[protein] + ADP + H(+). Activated by cGMP. The cGMP-binding domains acts cooperatively to activate PKG. Inhibited by the antiparasitic small molecule 4-[2-(4-fluorophenyl)-5-(1-methylpiperidine-4-yl)-1Hpyrrol- 3-yl]pyridine (compound 1). Functionally, serine/threonine protein kinase which acts as a downstream effector of the second messenger cGMP. This is cGMP-dependent protein kinase from Eimeria tenella (Coccidian parasite).